The primary structure comprises 169 residues: Putative phosphoesterase SH1944 (169 aa).

Histidine 34 serves as the catalytic Proton donor. 2 consecutive short sequence motifs (HXTX) follow at residues 34-37 (HITI) and 115-118 (HFTI). Catalysis depends on histidine 115, which acts as the Proton acceptor.

It belongs to the 2H phosphoesterase superfamily. YjcG family.

This is Putative phosphoesterase SH1944 from Staphylococcus haemolyticus (strain JCSC1435).